The chain runs to 403 residues: Microtubule-associated protein tau (403 aa).

The span at 1–32 (MAEPRQEFDVMEDHAQGDYTLQDHEGDMEPGL) shows a compositional bias: basic and acidic residues. The interval 1 to 219 (MAEPRQEFDV…GPMPDLKNVK (219 aa)) is disordered. Position 2 is an N-acetylalanine (A2). Residue Y19 is modified to Phosphotyrosine. K33 participates in a covalent cross-link: Glycyl lysine isopeptide (Lys-Gly) (interchain with G-Cter in ubiquitin). Phosphoserine is present on residues S35 and S50. Residues 50–60 (SETSDAKSTPT) show a composition bias toward polar residues. Residues T58, T60, and T71 each carry the phosphothreonine modification. Positions 90–106 (KGKDGTGPDDKKAKGAD) are enriched in basic and acidic residues. Phosphothreonine is present on T115. R117 carries the post-translational modification Omega-N-methylarginine. N6,N6-dimethyllysine; alternate is present on K125. K125 carries the post-translational modification N6-acetyllysine; alternate. Phosphothreonine is present on residues T131, T137, T138, and T143. The span at 136–147 (KTTPTPKTSPGT) shows a compositional bias: low complexity. Phosphoserine occurs at positions 153 and 157. Positions 156-176 (RSGYSSPGSPGTPGSRSRTPS) are enriched in low complexity. Y159 is modified (phosphotyrosine). 3 positions are modified to phosphoserine: S160, S161, and S164. Phosphothreonine is present on residues T167 and T174. Phosphoserine is present on S176. T179 is subject to Phosphothreonine. The residue at position 187 (K187) is an N6-acetyllysine. At T193 the chain carries Phosphothreonine. Residues S197 and S199 each carry the phosphoserine modification. Tau/MAP repeat units lie at residues 206-236 (QAAP…GGGK), 237-267 (VQII…GGGS), 268-298 (VQIV…GGGQ), and 299-330 (VEVK…GGGN). Residue K216 forms a Glycyl lysine isopeptide (Lys-Gly) (interchain with G-Cter in ubiquitin) linkage. K221 carries the post-translational modification N6-acetyllysine; alternate. The residue at position 221 (K221) is an N6-methyllysine; alternate. A Glycyl lysine isopeptide (Lys-Gly) (interchain with G-Cter in ubiquitin); alternate cross-link involves residue K221. S224 carries the post-translational modification Phosphoserine. K229 participates in a covalent cross-link: Glycyl lysine isopeptide (Lys-Gly) (interchain with G-Cter in ubiquitin). Position 243 is an N6-acetyllysine; alternate (K243). A Glycyl lysine isopeptide (Lys-Gly) (interchain with G-Cter in ubiquitin); alternate cross-link involves residue K243. Phosphoserine occurs at positions 247 and 251. An N6-acetyllysine modification is found at K252. Cysteines 253 and 284 form a disulfide. The residue at position 255 (S255) is a Phosphoserine. Residue K260 is modified to N6-acetyllysine; alternate. K260 participates in a covalent cross-link: Glycyl lysine isopeptide (Lys-Gly) (interchain with G-Cter in ubiquitin); alternate. Position 267 is a phosphoserine (S267). An N6,N6-dimethyllysine; alternate modification is found at K273. An N6-acetyllysine; alternate mark is found at K273, K279, and K283. Glycyl lysine isopeptide (Lys-Gly) (interchain with G-Cter in ubiquitin); alternate cross-links involve residues K273, K279, and K283. S286 is modified (phosphoserine). Residues K293, K305, and K309 each carry the N6-acetyllysine; alternate modification. Residues K293, K305, and K309 each participate in a glycyl lysine isopeptide (Lys-Gly) (interchain with G-Cter in ubiquitin); alternate cross-link. Omega-N-methylarginine is present on R311. At S314 the chain carries Phosphoserine. K315 is covalently cross-linked (Glycyl lysine isopeptide (Lys-Gly) (interchain with G-Cter in ubiquitin)). Phosphoserine is present on S318. K331 is subject to N6-acetyllysine; alternate. A Glycyl lysine isopeptide (Lys-Gly) (interchain with G-Cter in ubiquitin); alternate cross-link involves residue K331. A Glycyl lysine isopeptide (Lys-Gly) (interchain with G-Cter in ubiquitin) cross-link involves residue K337. Position 347 is an N6-acetyllysine; alternate (K347). K347 participates in a covalent cross-link: Glycyl lysine isopeptide (Lys-Gly) (interchain with G-Cter in ubiquitin); alternate. A Phosphotyrosine modification is found at Y356. 2 positions are modified to phosphoserine: S358 and S362. Residues 360–379 (VVSGDTSPRHLSNVSSTGSI) form a disordered region. Positions 363–378 (GDTSPRHLSNVSSTGS) are enriched in polar residues. T365 is subject to Phosphothreonine. Phosphoserine occurs at positions 366, 371, 378, and 384. The residue at position 389 (T389) is a Phosphothreonine.

As to quaternary structure, interacts with MARK1, MARK2, MARK3 and MARK4. Interacts with SQSTM1 when polyubiquitinated. Interacts with PSMC2 through SQSTM1. Interacts with FKBP4. Binds to CSNK1D. Interacts with SGK1. Interacts with PIN1. Interacts with LRRK2. Interacts with LRP1, leading to endocytosis; this interaction is reduced in the presence of LRPAP1/RAP. Post-translationally, polyubiquitinated. Requires functional TRAF6 and may provoke SQSTM1-dependent degradation by the proteasome. In terms of processing, phosphorylation at various serine and threonine residues in S-P or T-P motifs by proline-directed protein kinases (PDPK1, CDK1, CDK5, GSK3, MAPK) (a few sites per protein in interphase, more in mitosis), and at serine residues in K-X-G-S motifs by MAP/microtubule affinity-regulating kinase (MARK1, MARK2, MARK3, MARK4), causing detachment from microtubules, and their disassembly. Phosphorylation at Ser-224 by BRSK1 and BRSK2 in neurons affects ability to bind microtubules and plays a role in neuron polarization. Phosphorylated by PHK. Dephosphorylation at several serine and threonine residues by the serine/threonine phosphatase PPP5C. In terms of tissue distribution, expressed in neurons.

It is found in the cytoplasm. Its subcellular location is the cytosol. It localises to the cell membrane. The protein localises to the cytoskeleton. The protein resides in the cell projection. It is found in the axon. Its subcellular location is the dendrite. Its function is as follows. Promotes microtubule assembly and stability, and might be involved in the establishment and maintenance of neuronal polarity. The C-terminus binds axonal microtubules while the N-terminus binds neural plasma membrane components, suggesting that tau functions as a linker protein between both. Axonal polarity is predetermined by tau localization (in the neuronal cell) in the domain of the cell body defined by the centrosome. The short isoforms allow plasticity of the cytoskeleton whereas the longer isoforms may preferentially play a role in its stabilization. In Capra hircus (Goat), this protein is Microtubule-associated protein tau (MAPT).